Consider the following 392-residue polypeptide: Ribosomal RNA large subunit methyltransferase G (392 aa).

Belongs to the methyltransferase superfamily. RlmG family.

The protein resides in the cytoplasm. The catalysed reaction is guanosine(1835) in 23S rRNA + S-adenosyl-L-methionine = N(2)-methylguanosine(1835) in 23S rRNA + S-adenosyl-L-homocysteine + H(+). Functionally, specifically methylates the guanine in position 1835 (m2G1835) of 23S rRNA. The sequence is that of Ribosomal RNA large subunit methyltransferase G from Shewanella frigidimarina (strain NCIMB 400).